The primary structure comprises 195 residues: Nucleoside-triphosphatase THEP1 (195 aa).

Residues 11-18 and 103-110 contribute to the ATP site; these read GRPGSGKS and VVVIDEIG.

This sequence belongs to the THEP1 NTPase family.

It carries out the reaction a ribonucleoside 5'-triphosphate + H2O = a ribonucleoside 5'-diphosphate + phosphate + H(+). Has nucleotide phosphatase activity towards ATP, GTP, CTP, TTP and UTP. May hydrolyze nucleoside diphosphates with lower efficiency. This chain is Nucleoside-triphosphatase THEP1, found in Korarchaeum cryptofilum (strain OPF8).